Here is a 293-residue protein sequence, read N- to C-terminus: MGSQLVPPPSAFNYIESQRDEFQLSHDLTEIVLQFPSTASQITARLSRSCMKIDHCVIEYRQQVPINASGTVIVEIHDKRMTDNESLQASWTFPIRCNIDLHYFSSSFFSLKDPIPWKLYYRVSDSNVHQMTHFAKFKGKLKLSSAKHSVDIPFRAPTVKILAKQFSEKDIDFWHVGYGKWERRLVKSASSSRFGLRGPIEINPGESWATKSAIGPTNRNADLDIEEELLPYRELNRLGTNILDPGESASIVGIQRSQSNITMSMSQLNELVRSTVHECIKTSCIPSTPKSLS.

This sequence belongs to the begomovirus movement protein BC1 family. Binds to dimeric supercoiled plasmid DNA. In terms of processing, phosphorylated.

It is found in the host cell membrane. It localises to the host microsome membrane. The protein resides in the host endoplasmic reticulum membrane. Its function is as follows. Transports viral genome to neighboring plant cells directly through plasmosdesmata, without any budding. The movement protein allows efficient cell to cell propagation, by bypassing the host cell wall barrier. Begomovirus genome is shuttled out of nucleus by Nuclear shuttle protein (NSP) and the movement protein transports the DNA-NSP complex to cell plasmodesmata and facilitates further movement across the cell wall. The polypeptide is Movement protein BC1 (Cucurbita moschata (Winter crookneck squash)).